The primary structure comprises 217 residues: Adenylate kinase (217 aa).

Residue Gly10 to Thr15 participates in ATP binding. The tract at residues Ser30–Val59 is NMP. Residues Thr31, Arg36, Glu57–Val59, Gly85–Arg88, and Gln92 contribute to the AMP site. An LID region spans residues Gly126 to Asp163. Arg127 contributes to the ATP binding site. 4 residues coordinate Zn(2+): Cys130, Cys133, Cys150, and Cys153. AMP contacts are provided by Arg160 and Arg171. Gly199 lines the ATP pocket.

The protein belongs to the adenylate kinase family. In terms of assembly, monomer.

The protein resides in the cytoplasm. The catalysed reaction is AMP + ATP = 2 ADP. It participates in purine metabolism; AMP biosynthesis via salvage pathway; AMP from ADP: step 1/1. Catalyzes the reversible transfer of the terminal phosphate group between ATP and AMP. Plays an important role in cellular energy homeostasis and in adenine nucleotide metabolism. This Salinispora tropica (strain ATCC BAA-916 / DSM 44818 / JCM 13857 / NBRC 105044 / CNB-440) protein is Adenylate kinase.